We begin with the raw amino-acid sequence, 777 residues long: Nuclear autoantigenic sperm protein (777 aa).

A2 is modified (N-acetylalanine). K34 bears the N6-acetyllysine mark. A TPR 1 repeat occupies 44–77 (AKKLLGLGQKHLVMGDIPAAVNAFQEAASLLGKK). A histone-binding region spans residues 117–128 (EEEEGEKTEEES). Phosphothreonine is present on T124. Residue S128 is modified to Phosphoserine. 3 stretches are compositionally biased toward basic and acidic residues: residues 152-186 (MGEKEAQKTEDKSLVKPEMDKEQETEMEKGGREDM), 227-259 (VTSKKPDQEIPGAEEGKSVSETDVQEECREKGG), and 267-276 (IEEKPKEASK). The tract at residues 152-496 (MGEKEAQKTE…ALENKSLQEN (345 aa)) is disordered. The interval 211-244 (EEGKGAAAPEGLSEAEVTSKKPDQEIPGAEEGKS) is histone-binding. K243 carries the N6-acetyllysine modification. S244 is subject to Phosphoserine. K285 is subject to N6-acetyllysine. The segment covering 303-319 (DEPKEQVAASESERGKA) has biased composition (basic and acidic residues). Residue S312 is modified to Phosphoserine. Residues 342 to 353 (AADASAAEAGSE) are compositionally biased toward low complexity. 3 positions are modified to phosphoserine: S399, S411, and S440. Positions 458–501 (EQMKEGEETEGSEEEDKENDKAEETLNDSALENKSLQENEEEEI) are histone-binding. Acidic residues predominate over residues 464 to 474 (EETEGSEEEDK). T466 is modified (phosphothreonine). A phosphoserine mark is found at S469, S486, and S492. Positions 484–493 (NDSALENKSL) are enriched in polar residues. TPR repeat units follow at residues 531 to 564 (AQAHLKLGEVSVESENYLQAVEEFQACLNLQEQY) and 573 to 606 (AETHYQLGLAYGYNSQYDEAVAQFSKSIEVIEKR). Residues 593 to 648 (VAQFSKSIEVIEKRMAVLNEQMKEAEGSPTEYEKEIEELKELLPEIREKIEDAKES) are a coiled coil. S651 bears the Phosphoserine mark. Residues 667–681 (STSGFTPSGGSSSVS) are compositionally biased toward low complexity. The disordered stretch occupies residues 667–777 (STSGFTPSGG…AGATVESTAC (111 aa)). A Phosphothreonine modification is found at T672. S694 and S695 each carry phosphoserine. The short motif at 705–711 (VRKKRKP) is the Nuclear localization signal element. Positions 710 to 728 (KPEEESPRKDDAKKAKQEP) are enriched in basic and acidic residues. S715 carries the phosphoserine modification. K725 participates in a covalent cross-link: Glycyl lysine isopeptide (Lys-Gly) (interchain with G-Cter in SUMO1). S734 is subject to Phosphoserine.

It belongs to the NASP family. As to quaternary structure, binds to linker H1 histones. Interacts with histones H2A, H2B, H3 and H4. Interacts with histone H3.3. Interacts with histones H3 and H4; NASP is a histone chaperone that stabilizes and maintains a soluble pool of histone H3-H4 dimers. Interacts with ASF1A and ASF1B; the interaction is probably indirect and mediated by H3-H4. Also binds to HSP90 in the cytoplasm. This interaction stimulates binding of NASP to H1-6/H1T.

Its subcellular location is the cytoplasm. The protein resides in the nucleus. Component of the histone chaperone network. Binds and stabilizes histone H3-H4 not bound to chromatin to maintain a soluble reservoir and modulate degradation by chaperone-mediated autophagy. Required for DNA replication, normal cell cycle progression and cell proliferation. Forms a cytoplasmic complex with HSP90 and H1 linker histones and stimulates HSP90 ATPase activity. NASP and H1 histone are subsequently released from the complex and translocate to the nucleus where the histone is released for binding to DNA. The protein is Nuclear autoantigenic sperm protein of Bos taurus (Bovine).